A 730-amino-acid polypeptide reads, in one-letter code: ATP-binding cassette sub-family D member 1 (730 aa).

4 helical membrane passes run A24–P44, F137–V157, A169–I189, and A276–L296. The ABC transmembrane type-1 domain occupies T136–M373. Positions I505–Q727 constitute an ABC transporter domain. G538–S545 provides a ligand contact to ATP.

Belongs to the ABC transporter superfamily. ABCD family. Peroxisomal fatty acyl CoA transporter (TC 3.A.1.203) subfamily.

It localises to the peroxisome membrane. The catalysed reaction is an acyl-CoA(out) + ATP + H2O = an acyl-CoA(in) + ADP + phosphate + H(+). In terms of biological role, plays a role in the transport of free very-long-chain fatty acids (VLCFAs) as well as their CoA-esters across the peroxisomal membrane by acting as an ATP-specific binding subunit releasing ADP after ATP hydrolysis. Thus, plays a role in regulation of VLCFAs and energy metabolism namely, in the degradation and biosynthesis of fatty acids by beta-oxidation, mitochondrial function and microsomal fatty acid elongation. This Drosophila melanogaster (Fruit fly) protein is ATP-binding cassette sub-family D member 1.